Reading from the N-terminus, the 627-residue chain is MGLATTTSSMSQDYHHHQGIFSFSNGFHRSSSTTHQEEVDESAVVSGAQIPVYETAGMLSEMFAYPGGGGGGSGGEILDQSTKQLLEQQNRHNNNNNSTLHMLLPNHHQGFAFTDENTMQPQQQQHFTWPSSSSDHHQNRDMIGTVHVEGGKGLSLSLSSSLAAAKAEEYRSIYCAAVDGTSSSSNASAHHHQFNQFKNLLLENSSSQHHHHQVVGHFGSSSSSPMAASSSIGGIYTLRNSKYTKPAQELLEEFCSVGRGHFKKNKLSRNNSNPNTTGGGGGGGSSSSAGTANDSPPLSPADRIEHQRRKVKLLSMLEEVDRRYNHYCEQMQMVVNSFDQVMGYGAAVPYTTLAQKAMSRHFRCLKDAVAVQLKRSCELLGDKEAAGAASSGLTKGETPRLRLLEQSLRQQRAFHHMGMMEQEAWRPQRGLPERSVNILRAWLFEHFLNPYPSDADKHLLARQTGLSRNQVSNWFINARVRLWKPMVEEMYQQEAKEREEAEEENENQQQQRRQQQTNNNDTKPNNNENNFTVITAQTPTTMTSTHHENDSSFLSSVAAASHGGSDAFTVATCQQDVSDFHVDGDGVNVIRFGTKQTGDVSLTLGLRHSGNIPDKNTSFSVRDFGDF.

The segment at 206 to 225 (SSQHHHHQVVGHFGSSSSSP) is disordered. A compositionally biased stretch (low complexity) spans 215–225 (VGHFGSSSSSP). Residues 241-257 (SKYTKPAQELLEEFCSV) form an SR/KY domain region. Positions 263 to 307 (KKNKLSRNNSNPNTTGGGGGGGSSSSAGTANDSPPLSPADRIEHQ) are disordered. The segment at 302 to 373 (DRIEHQRRKV…CLKDAVAVQL (72 aa)) is BELL domain. Positions 424–486 (AWRPQRGLPE…NARVRLWKPM (63 aa)) form a DNA-binding region, homeobox. The interval 494–530 (EAKEREEAEEENENQQQQRRQQQTNNNDTKPNNNENN) is disordered. Low complexity predominate over residues 507 to 530 (NQQQQRRQQQTNNNDTKPNNNENN).

Belongs to the TALE/BELL homeobox family. As to quaternary structure, may form heterodimeric complexes with TALE/KNOX proteins. Interacts with OFP1, OFP2 and OFP5. Interacts with KNATM, isoform KNATM-B. In terms of tissue distribution, expressed in lateral organs.

The protein localises to the nucleus. In terms of biological role, transcription factor that establishes leaf shape by repressing growth in specific subdomains of the leaf. Negatively regulates knox homeobox gene KNAT1/BP expression. This is BEL1-like homeodomain protein 4 (BLH4) from Arabidopsis thaliana (Mouse-ear cress).